The sequence spans 259 residues: UPF0246 protein NMB0895 (259 aa).

The protein belongs to the UPF0246 family.

The sequence is that of UPF0246 protein NMB0895 from Neisseria meningitidis serogroup B (strain ATCC BAA-335 / MC58).